Consider the following 239-residue polypeptide: MSEVITQEYTEDGKVLRRIRSFVRREGRLTKGQEAAMKECWPTMGIDYQPELLDWQQVFGNDNPVVLEIGFGMGASLVEMAKNAPEKNFLGIEVHSPGVGACLASAREAGVTNLRVMCHDAVEVFAHMIPDNSLHTLQLFFPDPWHKKRHHKRRIVQLEFAEMVRQKLMIGSGVFHMATDWENYAEHMVEVMNQAPGFANLATDGDYVPRPDERPLTKFEQRGHRLGHGVWDIKYQRTA.

4 residues coordinate S-adenosyl-L-methionine: Glu68, Glu93, Asp120, and Asp143. Residue Asp143 is part of the active site. Substrate-binding positions include Lys147, Asp180, and Thr217 to Glu220.

The protein belongs to the class I-like SAM-binding methyltransferase superfamily. TrmB family.

The catalysed reaction is guanosine(46) in tRNA + S-adenosyl-L-methionine = N(7)-methylguanosine(46) in tRNA + S-adenosyl-L-homocysteine. It functions in the pathway tRNA modification; N(7)-methylguanine-tRNA biosynthesis. In terms of biological role, catalyzes the formation of N(7)-methylguanine at position 46 (m7G46) in tRNA. This is tRNA (guanine-N(7)-)-methyltransferase from Vibrio cholerae serotype O1 (strain ATCC 39315 / El Tor Inaba N16961).